The chain runs to 907 residues: MAGELVSFGIKKLWDLLSQECEQFQGVEDQVTGLKRDLNLLSSFLKDADAKKHTTAVVRNVVEEIKEIVYDAEDIIETYLLKEKLWKTSGIKMRIRRHACIISDRRRNALDVGGIRTRISDVIRDMQSFGVQQAIVDGGYMQPQGDRQREMRQTFSKDYESDFVGLEVNVKKLVGYLVDEENVQVVSITGMGGLGKTTLARQVFNHEDVKHQFDRLAWVCVSQEFTRKNVWQMILQNLTSREKKDEILQMEEAELHDKLFQLLETSKSLIVFDDIWKDEDWDLIKPIFPPNKGWKVLLTSQNESVAVRGDIKYLNFKPECLAIEDSWTLFQRIAFPKKDASESKVDEEMEDMGKQMLKHCGGLPLAIKVLGGLLAAKYTMHDWERLSVNIGSDIVGRTSSNNSSIYHVLSMSFEELPSYLKHCFLYLAHFPEDHKINVEKLSYCWAAEGISTAEDYHNGETIQDVGQSYLEELVRRNMIIWERDATASRFGTCHLHDMMREVCLFKAKEENFLQIAVKSVGVTSSSTGNSQSPCRSRRLVYQCPTTLHVERDINNPKLRSLVVLWHDLWVENWKLLGTSFTRLKLLRVLDLFYVDFEGMKLPFGIGNLIHLRYLSLQDAKVSHLPSSLGNLMLLIYLNLDVDTEFIFVPDVFMRMHELRYLKLPLHMHKKTRLSLRNLVKLETLVYFSTWHSSSKDLCGMTRLMTLAIRLTRVTSTETLSASISGLRNLEYLYIVGTHSKKMREEGIVLDFIHLKHLLLDLYMPRQQHFPSRLTFVKLSECGLEEDPMPILEKLLHLKGVILLKGSYCGRRMVCSGGGFPQLKKLEIVGLNKWEEWLVEEGSMPLLETLSILDCEELKEIPDGLRFIYSLELVMLGTRWKKKFSVGGEDYYKVQHIPSVEFIGGYLK.

One can recognise an NB-ARC domain in the interval 144–456 (QGDRQREMRQ…AEGISTAEDY (313 aa)). 190 to 197 (GMGGLGKT) is an ATP binding site. LRR repeat units lie at residues 608 to 631 (LIHLRYLSLQDAKVSHLPSSLGNL) and 843 to 868 (MPLLETLSILDCEELKEIPDGLRFIY).

The protein belongs to the disease resistance NB-LRR family.

Its function is as follows. Possible disease resistance protein. In Arabidopsis thaliana (Mouse-ear cress), this protein is Probable disease resistance protein At1g58390.